The chain runs to 454 residues: NADP-specific glutamate dehydrogenase (454 aa).

Position 2 is an N-acetylserine (Ser2). Lys114 is a catalytic residue.

The protein belongs to the Glu/Leu/Phe/Val dehydrogenases family. Homohexamer.

It catalyses the reaction L-glutamate + NADP(+) + H2O = 2-oxoglutarate + NH4(+) + NADPH + H(+). The chain is NADP-specific glutamate dehydrogenase (GDH) from Neurospora intermedia.